A 204-amino-acid polypeptide reads, in one-letter code: Large ribosomal subunit protein eL15 (204 aa).

The protein belongs to the eukaryotic ribosomal protein eL15 family. In terms of assembly, component of the large ribosomal subunit.

It localises to the cytoplasm. Component of the large ribosomal subunit. The ribosome is a large ribonucleoprotein complex responsible for the synthesis of proteins in the cell. The chain is Large ribosomal subunit protein eL15 (rpl15) from Megalobrama amblycephala (Chinese blunt snout bream).